Here is a 37-residue protein sequence, read N- to C-terminus: Large ribosomal subunit protein bL36c (37 aa).

Belongs to the bacterial ribosomal protein bL36 family.

The protein localises to the plastid. It is found in the chloroplast. The protein is Large ribosomal subunit protein bL36c of Jasminum nudiflorum (Winter jasmine).